The chain runs to 205 residues: Snake venom metalloproteinase BmooMPalpha-I (205 aa).

The Peptidase M12B domain occupies 8–204 (RYIELVVVAD…HNPQCILNEP (197 aa)). The Ca(2+) site is built by E11 and D95. 3 cysteine pairs are disulfide-bonded: C119/C199, C159/C183, and C161/C166. Position 144 (H144) interacts with Zn(2+). E145 is an active-site residue. Residues H148 and H154 each coordinate Zn(2+). The Ca(2+) site is built by C199 and N202.

This sequence belongs to the venom metalloproteinase (M12B) family. P-I subfamily. In terms of assembly, monomer. Zn(2+) serves as cofactor. In terms of tissue distribution, expressed by the venom gland.

It localises to the secreted. With respect to regulation, inhibited by EDTA. Not inhibited by the serine proteinase inhibitors aprotinin and benzamidine. Snake venom zinc metalloproteinase that cleaves the alpha chain of fibrinogen (FGA) first followed by the beta chain (FGB) and shows no effect on the gamma chain. Cleaves only the beta chain of fibrin, leaving the gamma-dimer untouched. Shows proteolytic activity towards azocasein. Causes defibrinogenation when intraperitoneally administered on mice. The polypeptide is Snake venom metalloproteinase BmooMPalpha-I (Bothrops moojeni (Lance-headed viper)).